Here is a 323-residue protein sequence, read N- to C-terminus: Aspartate carbamoyltransferase catalytic subunit (323 aa).

2 residues coordinate carbamoyl phosphate: R71 and T72. Residue K99 participates in L-aspartate binding. Residues R121, H151, and Q154 each contribute to the carbamoyl phosphate site. Residues R184 and R239 each coordinate L-aspartate. Residues G280 and P281 each contribute to the carbamoyl phosphate site.

The protein belongs to the aspartate/ornithine carbamoyltransferase superfamily. ATCase family. Heterododecamer (2C3:3R2) of six catalytic PyrB chains organized as two trimers (C3), and six regulatory PyrI chains organized as three dimers (R2).

The catalysed reaction is carbamoyl phosphate + L-aspartate = N-carbamoyl-L-aspartate + phosphate + H(+). Its pathway is pyrimidine metabolism; UMP biosynthesis via de novo pathway; (S)-dihydroorotate from bicarbonate: step 2/3. In terms of biological role, catalyzes the condensation of carbamoyl phosphate and aspartate to form carbamoyl aspartate and inorganic phosphate, the committed step in the de novo pyrimidine nucleotide biosynthesis pathway. The protein is Aspartate carbamoyltransferase catalytic subunit of Cupriavidus pinatubonensis (strain JMP 134 / LMG 1197) (Cupriavidus necator (strain JMP 134)).